Here is a 205-residue protein sequence, read N- to C-terminus: GTP cyclohydrolase-2 (205 aa).

Residue R49–E53 coordinates GTP. The Zn(2+) site is built by C54, C65, and C67. Residues Q70, E92–R94, and T114 each bind GTP. D126 functions as the Proton acceptor in the catalytic mechanism. The active-site Nucleophile is R128. Residues T149 and K154 each contribute to the GTP site.

This sequence belongs to the GTP cyclohydrolase II family. It depends on Zn(2+) as a cofactor.

It carries out the reaction GTP + 4 H2O = 2,5-diamino-6-hydroxy-4-(5-phosphoribosylamino)-pyrimidine + formate + 2 phosphate + 3 H(+). It participates in cofactor biosynthesis; riboflavin biosynthesis; 5-amino-6-(D-ribitylamino)uracil from GTP: step 1/4. Its function is as follows. Catalyzes the conversion of GTP to 2,5-diamino-6-ribosylamino-4(3H)-pyrimidinone 5'-phosphate (DARP), formate and pyrophosphate. The sequence is that of GTP cyclohydrolase-2 from Pseudomonas putida (strain W619).